Here is a 620-residue protein sequence, read N- to C-terminus: MAATRIAILYGSETGTAQDFANILSHQLRRFHYKHTVCSIGEYSAQNILACQYLFVICSTTGQGALPQNARQSPQGKVEGTLWSVLKRSSLPPTLLDHLQVAFLGLGDSSYSKFNFAIRKLHNRIVGQLGAREIFPRLEADAIGLAGSNAGNGNGIELVYSEFEKRVLSFLNDQFPFMTVNGEQVPREPIATDIYLKPEYYLEASGNDKGTASVPCTFEGDSSVKYGTVVTNKRITATDHFQDVRQLVFSSQDGENYYPGDTVSIYPYNTDADVQAFIDTQQHWASIADVPLQIKTPTSARGICDGGLVSPLTLRNLLKYHCDIVSIPMRSFFMKTWTFAVDHERLPDGKDQLQQQRDKLREFAESEDMQDIYDYCNRPRRSILEVVQDFMSLRLPWEYILDYLPHIKPRFFSISSQPCNKDIELTIAIVRYKTILRRIRRGLCTNYISDLSEGSIIRYKVQYNDLLPAGKQDRPVIMISPGVGLAPMKCLIYAQLFNPMLLFFGNRYKDKDFLYADTLQKWADENRIKLFVCFSRSPDDSPGLKYVQDAVWENAREVARLITEENAVVYVCGSSGKMPVQVRLTLCEVLKKWGNFPDDKASEEYLKDMENSDRYLQETW.

The region spanning 6–168 (IAILYGSETG…VYSEFEKRVL (163 aa)) is the Flavodoxin-like domain. FMN contacts are provided by residues 12-17 (SETGTA), 59-62 (STTG), and 106-115 (LGDSSYSKFN). An FAD-binding FR-type domain is found at 222–475 (SSVKYGTVVT…LLPAGKQDRP (254 aa)). FAD is bound by residues R380, 410–413 (RFFS), and 442–445 (GLCT). Residue 535–536 (SR) participates in NADP(+) binding. Residue W620 participates in FAD binding.

This sequence belongs to the NADPH-dependent diflavin oxidoreductase NDOR1 family. The protein in the N-terminal section; belongs to the flavodoxin family. It in the C-terminal section; belongs to the flavoprotein pyridine nucleotide cytochrome reductase family. In terms of assembly, interacts with DRE2; as part of the cytosolic iron-sulfur (Fe-S) protein assembly (CIA) machinery. It depends on FAD as a cofactor. Requires FMN as cofactor.

It localises to the cytoplasm. Its subcellular location is the mitochondrion. It carries out the reaction 2 oxidized [2Fe-2S]-[protein] + NADPH = 2 reduced [2Fe-2S]-[protein] + NADP(+) + H(+). NADPH-dependent reductase which is a central component of the cytosolic iron-sulfur (Fe-S) protein assembly (CIA) machinery. Transfers electrons from NADPH via its FAD and FMN prosthetic groups to the [2Fe-2S] cluster of DRE2, another key component of the CIA machinery. In turn, this reduced cluster provides electrons for assembly of cytosolic iron-sulfur cluster proteins. Positively controls H(2)O(2)-induced cell death. In Eremothecium gossypii (strain ATCC 10895 / CBS 109.51 / FGSC 9923 / NRRL Y-1056) (Yeast), this protein is NADPH-dependent diflavin oxidoreductase 1.